The sequence spans 512 residues: MSLSEPIFRMEGISKRYGGAIALKDADIAIRRGAIHAVLGENGAGKSTLIKIMAGVVTPDEGRMLLDGREIAFASPAAANAVGIVCVFQELSLIPDLSVADNITISHPPQRFGMIDRRAQRRIAEEALTRAGASDIHPSILVKDLPLSRRQMVEIAKALARKPRLIILDEATSALTRSDVEKVFAVLKRLRAEGMALIYISHRMHEIAQLADDCTVFRNGRSIESYPAGTKTDQQVVELMIGREYNNVFPPKPAHRPEEKPILSCRELSWGDRLSGITFDIRPGEVVGLGGLDGQGQRDLLLAFFGVLRDLKGEIAIDGTQVKLRSPRHAKSGGISMALIPEDRKTEGLMLPMTVRENLSIAALDRISRNGVIDRAAERREIDDLFKLLAIKAATIDMPVAGLSGGNQQKVVIAKWLMNRPRIILLNDPTRGIDVGTKQEIYLLLRKLADGGAAIIFYSTDYDELIGCCDRVLVMYDGSIVRELEGADINEHELIGAALNIGGEHAQQRIAP.

ABC transporter domains are found at residues 8–244 and 257–502; these read FRME…IGRE and PEEK…LNIG. 40-47 serves as a coordination point for ATP; that stretch reads GENGAGKS.

Belongs to the ABC transporter superfamily. Ribose importer (TC 3.A.1.2.1) family. The complex is composed of an ATP-binding protein (RbsA), two transmembrane proteins (RbsC) and a solute-binding protein (RbsB).

Its subcellular location is the cell inner membrane. The catalysed reaction is D-ribose(out) + ATP + H2O = D-ribose(in) + ADP + phosphate + H(+). Its function is as follows. Part of the ABC transporter complex RbsABC involved in ribose import. Responsible for energy coupling to the transport system. This is Ribose import ATP-binding protein RbsA 1 from Rhizobium etli (strain ATCC 51251 / DSM 11541 / JCM 21823 / NBRC 15573 / CFN 42).